The primary structure comprises 190 residues: Peptidyl-tRNA hydrolase (190 aa).

Residue Y18 coordinates tRNA. The Proton acceptor role is filled by H23. TRNA contacts are provided by F67, N69, and N115.

It belongs to the PTH family. In terms of assembly, monomer.

The protein localises to the cytoplasm. It carries out the reaction an N-acyl-L-alpha-aminoacyl-tRNA + H2O = an N-acyl-L-amino acid + a tRNA + H(+). Its function is as follows. Hydrolyzes ribosome-free peptidyl-tRNAs (with 1 or more amino acids incorporated), which drop off the ribosome during protein synthesis, or as a result of ribosome stalling. Catalyzes the release of premature peptidyl moieties from peptidyl-tRNA molecules trapped in stalled 50S ribosomal subunits, and thus maintains levels of free tRNAs and 50S ribosomes. The sequence is that of Peptidyl-tRNA hydrolase from Leptospira interrogans serogroup Icterohaemorrhagiae serovar Lai (strain 56601).